A 156-amino-acid polypeptide reads, in one-letter code: MSNTSEDNITVRFVTENDKEGWQRLWKSYQDFYEVSFPDDLDDFNFGRFLDPNIKMWAAVAVESSSEKIIGMINFFNHMTTWDFKDKIYINDLYVDENSRVKGAGGKLIQFVYDEADKLGTPSVYWCTDESNHRAQLLYVKVGYKAPKILYKRKGY.

The N-acetyltransferase domain maps to 9 to 156; sequence ITVRFVTEND…PKILYKRKGY (148 aa). 93–106 contacts acetyl-CoA; it reads LYVDENSRVKGAGG.

It belongs to the acetyltransferase family. GNAT subfamily. Forms homodimers in the absence, and homotetramers in the presence of acetyl-CoA. Autoacetylates in an intermolecular reaction.

It catalyses the reaction L-lysyl-[protein] + acetyl-CoA = N(6)-acetyl-L-lysyl-[protein] + CoA + H(+). N-acetyltransferase that acetylates histone H3 at 'Lys-14' and histone H4 at 'Lys-5' and 'Lys-12'. Also acetylates polyamines like putrescine, spermidine and spermine, and certain other small basic proteins like nuclear HMG proteins. This is Histone acetyltransferase HPA2 from Saccharomyces cerevisiae (strain ATCC 204508 / S288c) (Baker's yeast).